Reading from the N-terminus, the 290-residue chain is 4-hydroxybenzoate octaprenyltransferase (290 aa).

The next 8 membrane-spanning stretches (helical) occupy residues 23–43 (IGAL…TPGM), 46–66 (LWIL…GCVV), 99–119 (LFVV…AMTI), 141–161 (LPQV…FAAV), 163–183 (ESLP…AVAY), 212–232 (TLII…IGWL), 233–253 (NGLG…FVYQ), and 268–288 (AFMN…MSYW).

The protein belongs to the UbiA prenyltransferase family. The cofactor is Mg(2+).

The protein localises to the cell inner membrane. It carries out the reaction all-trans-octaprenyl diphosphate + 4-hydroxybenzoate = 4-hydroxy-3-(all-trans-octaprenyl)benzoate + diphosphate. Its pathway is cofactor biosynthesis; ubiquinone biosynthesis. In terms of biological role, catalyzes the prenylation of para-hydroxybenzoate (PHB) with an all-trans polyprenyl group. Mediates the second step in the final reaction sequence of ubiquinone-8 (UQ-8) biosynthesis, which is the condensation of the polyisoprenoid side chain with PHB, generating the first membrane-bound Q intermediate 3-octaprenyl-4-hydroxybenzoate. This Salmonella typhi protein is 4-hydroxybenzoate octaprenyltransferase.